The chain runs to 513 residues: ATP synthase subunit alpha (513 aa).

171–178 is a binding site for ATP; that stretch reads GDRQIGKT.

This sequence belongs to the ATPase alpha/beta chains family. As to quaternary structure, F-type ATPases have 2 components, CF(1) - the catalytic core - and CF(0) - the membrane proton channel. CF(1) has five subunits: alpha(3), beta(3), gamma(1), delta(1), epsilon(1). CF(0) has three main subunits: a(1), b(2) and c(9-12). The alpha and beta chains form an alternating ring which encloses part of the gamma chain. CF(1) is attached to CF(0) by a central stalk formed by the gamma and epsilon chains, while a peripheral stalk is formed by the delta and b chains.

The protein resides in the cell membrane. The catalysed reaction is ATP + H2O + 4 H(+)(in) = ADP + phosphate + 5 H(+)(out). Produces ATP from ADP in the presence of a proton gradient across the membrane. The alpha chain is a regulatory subunit. The chain is ATP synthase subunit alpha from Wolbachia pipientis wMel.